A 511-amino-acid polypeptide reads, in one-letter code: Bifunctional purine biosynthesis protein PurH (511 aa).

Positions 1–145 constitute an MGS-like domain; it reads MKKRALVSVS…KNHKFVSVIV (145 aa).

Belongs to the PurH family.

It carries out the reaction (6R)-10-formyltetrahydrofolate + 5-amino-1-(5-phospho-beta-D-ribosyl)imidazole-4-carboxamide = 5-formamido-1-(5-phospho-D-ribosyl)imidazole-4-carboxamide + (6S)-5,6,7,8-tetrahydrofolate. The enzyme catalyses IMP + H2O = 5-formamido-1-(5-phospho-D-ribosyl)imidazole-4-carboxamide. It participates in purine metabolism; IMP biosynthesis via de novo pathway; 5-formamido-1-(5-phospho-D-ribosyl)imidazole-4-carboxamide from 5-amino-1-(5-phospho-D-ribosyl)imidazole-4-carboxamide (10-formyl THF route): step 1/1. It functions in the pathway purine metabolism; IMP biosynthesis via de novo pathway; IMP from 5-formamido-1-(5-phospho-D-ribosyl)imidazole-4-carboxamide: step 1/1. This Bacillus anthracis (strain A0248) protein is Bifunctional purine biosynthesis protein PurH.